Here is a 103-residue protein sequence, read N- to C-terminus: Ubiquitin-related modifier 1 (103 aa).

1-thioglycine is present on Gly-103. Residue Gly-103 forms a Glycyl lysine isopeptide (Gly-Lys) (interchain with K-? in acceptor proteins) linkage.

This sequence belongs to the URM1 family. Post-translationally, C-terminal thiocarboxylation occurs in 2 steps, it is first acyl-adenylated (-COAMP) via the hesA/moeB/thiF part of UBA4, then thiocarboxylated (-COSH) via the rhodanese domain of UBA4.

It localises to the cytoplasm. It functions in the pathway tRNA modification; 5-methoxycarbonylmethyl-2-thiouridine-tRNA biosynthesis. Its function is as follows. Acts as a sulfur carrier required for 2-thiolation of mcm(5)S(2)U at tRNA wobble positions of cytosolic tRNA(Lys), tRNA(Glu) and tRNA(Gln). Serves as sulfur donor in tRNA 2-thiolation reaction by being thiocarboxylated (-COSH) at its C-terminus by the MOCS3 homolog UBA4. The sulfur is then transferred to tRNA to form 2-thiolation of mcm(5)S(2)U. Prior mcm(5) tRNA modification by the elongator complex is required for 2-thiolation. Also acts as a ubiquitin-like protein (UBL) that is covalently conjugated via an isopeptide bond to lysine residues of target proteins such as AHP1. The thiocarboxylated form serves as substrate for conjugation and oxidative stress specifically induces the formation of UBL-protein conjugates. This Vanderwaltozyma polyspora (strain ATCC 22028 / DSM 70294 / BCRC 21397 / CBS 2163 / NBRC 10782 / NRRL Y-8283 / UCD 57-17) (Kluyveromyces polysporus) protein is Ubiquitin-related modifier 1.